Reading from the N-terminus, the 263-residue chain is Ribonuclease HII (263 aa).

In terms of domain architecture, RNase H type-2 spans 71–262; it reads QAIAGIDEVG…VKSMCCDSTN (192 aa). A divalent metal cation is bound by residues D77, E78, and D172.

It belongs to the RNase HII family. Mn(2+) serves as cofactor. It depends on Mg(2+) as a cofactor.

The protein resides in the cytoplasm. The catalysed reaction is Endonucleolytic cleavage to 5'-phosphomonoester.. In terms of biological role, endonuclease that specifically degrades the RNA of RNA-DNA hybrids. The polypeptide is Ribonuclease HII (Streptococcus pyogenes serotype M5 (strain Manfredo)).